The following is a 401-amino-acid chain: Glutamyl-tRNA reductase (401 aa).

Substrate contacts are provided by residues 45 to 48, S101, 106 to 108, and Q112; these read TCNR and EDQ. The active-site Nucleophile is the C46. Position 177–182 (177–182) interacts with NADP(+); the sequence is GYGDVG.

It belongs to the glutamyl-tRNA reductase family. Homodimer.

The enzyme catalyses (S)-4-amino-5-oxopentanoate + tRNA(Glu) + NADP(+) = L-glutamyl-tRNA(Glu) + NADPH + H(+). Its pathway is porphyrin-containing compound metabolism; protoporphyrin-IX biosynthesis; 5-aminolevulinate from L-glutamyl-tRNA(Glu): step 1/2. Functionally, catalyzes the NADPH-dependent reduction of glutamyl-tRNA(Glu) to glutamate 1-semialdehyde (GSA). The sequence is that of Glutamyl-tRNA reductase from Clostridium botulinum (strain Eklund 17B / Type B).